The following is a 72-amino-acid chain: MEKSFYRYLLRFRHGYEEDPVVRFANGAYDDHGFPKGSADYEELSGYLELNGDYLESMVIFDELWEQFLHET.

The protein belongs to the UPF0346 family.

In Geobacillus thermodenitrificans (strain NG80-2), this protein is UPF0346 protein GTNG_1419.